The following is a 486-amino-acid chain: Malonate-semialdehyde dehydrogenase 1 (486 aa).

The NAD(+) site is built by Phe-154, Lys-178, Glu-181, Arg-182, and Ser-231. Cys-286 acts as the Nucleophile in catalysis. An NAD(+)-binding site is contributed by Glu-386.

The protein belongs to the aldehyde dehydrogenase family. IolA subfamily. Homotetramer.

It catalyses the reaction 3-oxopropanoate + NAD(+) + CoA + H2O = hydrogencarbonate + acetyl-CoA + NADH + H(+). It carries out the reaction 2-methyl-3-oxopropanoate + NAD(+) + CoA + H2O = propanoyl-CoA + hydrogencarbonate + NADH + H(+). It functions in the pathway polyol metabolism; myo-inositol degradation into acetyl-CoA; acetyl-CoA from myo-inositol: step 7/7. Catalyzes the oxidation of malonate semialdehyde (MSA) and methylmalonate semialdehyde (MMSA) into acetyl-CoA and propanoyl-CoA, respectively. Is involved in a myo-inositol catabolic pathway. Bicarbonate, and not CO2, is the end-product of the enzymatic reaction. The chain is Malonate-semialdehyde dehydrogenase 1 from Bacillus thuringiensis (strain Al Hakam).